Consider the following 347-residue polypeptide: Haptoglobin (347 aa).

The first 18 residues, 1–18, serve as a signal peptide directing secretion; the sequence is MRALGAVVTLLLWGQLFA. A Sushi domain is found at 31-88; that stretch reads DSCPKPPEIANGYVEHLVRYRCRQFYRLRTEGDGVYTLNDEKQWVNTAAGEKLPECEA. 4 cysteine pairs are disulfide-bonded: Cys-52–Cys-86, Cys-90–Cys-207, Cys-250–Cys-281, and Cys-292–Cys-322. Residues 103–345 enclose the Peptidase S1 domain; sequence IIGGSMDAKG…LKDWVQETMA (243 aa). N-linked (GlcNAc...) asparagine glycans are attached at residues Asn-148, Asn-182, Asn-256, and Asn-264. An interaction with CD163 region spans residues 259-264; the sequence is VPEKKN.

Belongs to the peptidase S1 family. Tetramer of two alpha and two beta chains; disulfide-linked. The hemoglobin/haptoglobin complex is composed of a haptoglobin dimer bound to two hemoglobin alpha-beta dimers. Interacts with CD163. Interacts with ERGIC3. As to expression, expressed by the liver and secreted in plasma.

It is found in the secreted. Its function is as follows. As a result of hemolysis, hemoglobin is found to accumulate in the kidney and is secreted in the urine. Haptoglobin captures, and combines with free plasma hemoglobin to allow hepatic recycling of heme iron and to prevent kidney damage. Haptoglobin also acts as an antioxidant, has antibacterial activity and plays a role in modulating many aspects of the acute phase response. Hemoglobin/haptoglobin complexes are rapidly cleared by the macrophage CD163 scavenger receptor expressed on the surface of liver Kupfer cells through an endocytic lysosomal degradation pathway. The protein is Haptoglobin (Hp) of Mus saxicola (Brown spiny mouse).